The following is a 104-amino-acid chain: MGMDIGLSHYLTVAAILFTLGTLGIFLNRKNVIVILMSVELILLAVNINLVSFSAFLGNLTGQVFALLVLTVAAAEAAIGLAILVVFYRNRGSIAVEDINAMKG.

3 consecutive transmembrane segments (helical) span residues 7–27 (LSHYLTVAAILFTLGTLGIFL), 33–53 (IVILMSVELILLAVNINLVSF), and 67–87 (LLVLTVAAAEAAIGLAILVVF).

Belongs to the complex I subunit 4L family. In terms of assembly, NDH-1 is composed of 14 different subunits. Subunits NuoA, H, J, K, L, M, N constitute the membrane sector of the complex.

It localises to the cell inner membrane. The enzyme catalyses a quinone + NADH + 5 H(+)(in) = a quinol + NAD(+) + 4 H(+)(out). NDH-1 shuttles electrons from NADH, via FMN and iron-sulfur (Fe-S) centers, to quinones in the respiratory chain. The immediate electron acceptor for the enzyme in this species is believed to be ubiquinone. Couples the redox reaction to proton translocation (for every two electrons transferred, four hydrogen ions are translocated across the cytoplasmic membrane), and thus conserves the redox energy in a proton gradient. This is NADH-quinone oxidoreductase subunit K from Xanthobacter autotrophicus (strain ATCC BAA-1158 / Py2).